The sequence spans 277 residues: Tumor necrosis factor-inducible gene 6 protein (277 aa).

The signal sequence occupies residues 1 to 17 (MIILIYLFLLLWEDTQG). Residues 36-129 (GVYHREARSG…SERWDAYCYN (94 aa)) form the Link domain. Cystine bridges form between cysteine 58-cysteine 127, cysteine 82-cysteine 103, and cysteine 135-cysteine 161. A glycan (N-linked (GlcNAc...) asparagine) is linked at asparagine 118. Positions 135-247 (CGGVFTDPKQ…GGFQIKYVAM (113 aa)) constitute a CUB domain. The Ca(2+) site is built by glutamate 183, aspartate 191, aspartate 232, serine 234, and valine 235. The cysteines at positions 188 and 210 are disulfide-linked. The N-linked (GlcNAc...) asparagine glycan is linked to asparagine 258.

Interacts (via Link domain) with inter-alpha-inhibitor (I-alpha-I) component bikunin. Interacts with ITIH2/HC2; this interaction is required for transesterification of the HC to hyaluronan. Interacts (via Link and CUB domains) with ITIH1. Chondroitin sulfate may be required for the stability of the complex. Interacts (via Link domain) with various C-X-C and C-C chemokines including PF4, CXCL8, CXCL11, CXCL12, CCL2, CCL7, CCL19, CCL21, and CCL27; this interaction interferes with chemokine binding to glycosaminoglycans. Interacts (primarily via Link domain) with BMP2; this interaction is inhibited by hyaluronan. Interacts (via both Link and CUB domains) with TNFSF11. Interacts (via CUB domain) with FN1 (via type III repeats 9-14); this interaction enhances fibronectin fibril assembly. TNFAIP6 may act as a bridging molecule between FN1 and THBS1. N-glycosylated. In terms of tissue distribution, expressed in airway epithelium and submucosal gland (at protein level). Colocalizes with bikunin at the ciliary border. Present in bronchoalveolar lavage fluid (at protein level). Expressed in mesenchymal stem cells. Found in the synovial fluid of patients with rheumatoid arthritis.

It localises to the secreted. In terms of biological role, major regulator of extracellular matrix organization during tissue remodeling. Catalyzes the transfer of a heavy chain (HC) from inter-alpha-inhibitor (I-alpha-I) complex to hyaluronan. Cleaves the ester bond between the C-terminus of the HC and GalNAc residue of the chondroitin sulfate chain in I-alpha-I complex followed by transesterification of the HC to hyaluronan. In the process, potentiates the antiprotease function of I-alpha-I complex through release of free bikunin. Acts as a catalyst in the formation of hyaluronan-HC oligomers and hyaluronan-rich matrix surrounding the cumulus cell-oocyte complex, a necessary step for oocyte fertilization. Assembles hyaluronan in pericellular matrices that serve as platforms for receptor clustering and signaling. Enables binding of hyaluronan deposited on the surface of macrophages to LYVE1 on lymphatic endothelium and facilitates macrophage extravasation. Alters hyaluronan binding to functionally latent CD44 on vascular endothelium, switching CD44 into an active state that supports leukocyte rolling. Modulates the interaction of chemokines with extracellular matrix components and proteoglycans on endothelial cell surface, likely preventing chemokine gradient formation. In a negative feedback mechanism, may limit excessive neutrophil recruitment at inflammatory sites by antagonizing the association of CXCL8 with glycosaminoglycans on vascular endothelium. Has a role in osteogenesis and bone remodeling. Inhibits BMP2-dependent differentiation of mesenchymal stem cell to osteoblasts. Protects against bone erosion during inflammation by inhibiting TNFSF11/RANKL-dependent osteoclast activation. The chain is Tumor necrosis factor-inducible gene 6 protein (TNFAIP6) from Homo sapiens (Human).